The chain runs to 172 residues: UPF0102 protein Pcryo_2198 (172 aa).

The protein belongs to the UPF0102 family.

This is UPF0102 protein Pcryo_2198 from Psychrobacter cryohalolentis (strain ATCC BAA-1226 / DSM 17306 / VKM B-2378 / K5).